The chain runs to 673 residues: Beta-galactosidase 8 (673 aa).

Positions 1 to 20 (MGPSRSFQNLLLLLLPLALA) are cleaved as a signal peptide. A glycan (N-linked (GlcNAc...) asparagine) is linked at Asn38. Residue Glu189 is the Proton donor of the active site. Residue Asn230 is glycosylated (N-linked (GlcNAc...) asparagine). Residue Glu272 is the Nucleophile of the active site. N-linked (GlcNAc...) asparagine glycosylation is found at Asn304, Asn329, Asn401, Asn489, and Asn540.

Belongs to the glycosyl hydrolase 35 family.

It localises to the secreted. Its subcellular location is the extracellular space. It is found in the apoplast. The catalysed reaction is Hydrolysis of terminal non-reducing beta-D-galactose residues in beta-D-galactosides.. This chain is Beta-galactosidase 8, found in Oryza sativa subsp. japonica (Rice).